Here is a 166-residue protein sequence, read N- to C-terminus: MFPMVTEFMNYGQQTVRAARYIGQGFMITLSHANRLPVTIQYPYEKLITSERFRGRIHFEFDKCIACEVCVRVCPIDLPVVDWKLETDIRKKRLLNYSIDFGICIFCGNCVEYCPTNCLSMTEEYELSTYDRHELNYTQIALGRLPMSIIDDYTIRTILNLPEIKT.

4Fe-4S ferredoxin-type domains are found at residues 55–84 (GRIH…VDWK) and 95–124 (LNYS…MTEE). Positions 64, 67, 70, 74, 104, 107, 110, and 114 each coordinate [4Fe-4S] cluster.

Belongs to the complex I 23 kDa subunit family. In terms of assembly, NDH is composed of at least 16 different subunits, 5 of which are encoded in the nucleus. [4Fe-4S] cluster serves as cofactor.

The protein resides in the plastid. The protein localises to the chloroplast thylakoid membrane. The catalysed reaction is a plastoquinone + NADH + (n+1) H(+)(in) = a plastoquinol + NAD(+) + n H(+)(out). It catalyses the reaction a plastoquinone + NADPH + (n+1) H(+)(in) = a plastoquinol + NADP(+) + n H(+)(out). Its function is as follows. NDH shuttles electrons from NAD(P)H:plastoquinone, via FMN and iron-sulfur (Fe-S) centers, to quinones in the photosynthetic chain and possibly in a chloroplast respiratory chain. The immediate electron acceptor for the enzyme in this species is believed to be plastoquinone. Couples the redox reaction to proton translocation, and thus conserves the redox energy in a proton gradient. This chain is NAD(P)H-quinone oxidoreductase subunit I, chloroplastic, found in Melampodium leucanthum (Black foot daisy).